Here is a 355-residue protein sequence, read N- to C-terminus: RGG repeats nuclear RNA binding protein A (355 aa).

The residue at position 2 (Ala-2) is an N-acetylalanine. Residues 26–225 form a disordered region; that stretch reads KIDKSKKSGQ…VEEKEPEDKE (200 aa). A compositionally biased stretch (low complexity) spans 37–47; the sequence is SSLPAKSAPKL. Composition is skewed to gly residues over residues 67–81 and 114–141; these read RGGGGRGGFNRGRGG and GGGAPRGSFRGEGGGPGGGRRGGFSNEG. The short motif at 132–139 is the Nuclear localization signal element; the sequence is GRRGGFSN. Over residues 143–168 the composition is skewed to basic and acidic residues; the sequence is DGERPRRAFERRSGTGRGSDFKRDGS. The short motif at 145 to 155 is the Arginine-rich RNA-binding motif E-R-P-R-R-X-[F/Y]-[E/D]-R-R-S element; the sequence is ERPRRAFERRS. A compositionally biased stretch (low complexity) spans 177–190; that stretch reads GEEIAAETEAVAGV. Composition is skewed to basic and acidic residues over residues 191–202 and 209–225; these read ETEKDVGEKPAV and ANKEDTVVEEKEPEDKE. In terms of domain architecture, FF spans 234-289; the sequence is ILEEKKKALQSLTTSERKVDTKVFESMQQLSNKKSNDEIFIKLGSDKDKRKDDKEE. Ser-268 is modified (phosphoserine). Residues 277–292 show a composition bias toward basic and acidic residues; the sequence is GSDKDKRKDDKEEKAK. The segment at 277–355 is disordered; sequence GSDKDKRKDD…AAQFPSLGGK (79 aa). Residues 323–333 show a composition bias toward gly residues; that stretch reads GRGGVSSGESG. Ser-351 bears the Phosphoserine mark.

This sequence belongs to the SERBP1-HABP4 family. Expressed in seedlings, leaves, roots, inflorescences, and siliques. Constitutively expressed in seedlings and roots.

The protein resides in the cytoplasm. Its subcellular location is the perinuclear region. It is found in the nucleus. Functionally, ribosome-binding protein that acts as a regulator of mRNA translation by promoting ribosome inactivation. Binds RNA. Regulates responses to abscisic acid (ABA). Promotes stomata closure in drought conditions. Involved in resistance to salt and drought stresses via the accumulation of Pro. The sequence is that of RGG repeats nuclear RNA binding protein A from Arabidopsis thaliana (Mouse-ear cress).